Consider the following 411-residue polypeptide: Tyrosine--tRNA ligase (411 aa).

Tyr-34 is an L-tyrosine binding site. The short motif at 39 to 48 is the 'HIGH' region element; the sequence is CTATSLHIGS. L-tyrosine-binding residues include Tyr-171 and Gln-175. The 'KMSKS' region motif lies at 231-235; sequence KMGKT. Lys-234 provides a ligand contact to ATP. One can recognise an S4 RNA-binding domain in the interval 345–411; that stretch reads ISAYNLFYNA…GKKRHILVKV (67 aa).

Belongs to the class-I aminoacyl-tRNA synthetase family. TyrS type 1 subfamily. Homodimer.

It localises to the cytoplasm. The catalysed reaction is tRNA(Tyr) + L-tyrosine + ATP = L-tyrosyl-tRNA(Tyr) + AMP + diphosphate + H(+). Catalyzes the attachment of tyrosine to tRNA(Tyr) in a two-step reaction: tyrosine is first activated by ATP to form Tyr-AMP and then transferred to the acceptor end of tRNA(Tyr). This chain is Tyrosine--tRNA ligase, found in Rickettsia prowazekii (strain Madrid E).